The primary structure comprises 366 residues: Chorismate synthase (366 aa).

Positions 48 and 54 each coordinate NADP(+). Residues 125 to 127 (RSS), 241 to 242 (NA), Gly-285, 300 to 304 (KPTSS), and Arg-326 each bind FMN.

It belongs to the chorismate synthase family. Homotetramer. The cofactor is FMNH2.

It carries out the reaction 5-O-(1-carboxyvinyl)-3-phosphoshikimate = chorismate + phosphate. The protein operates within metabolic intermediate biosynthesis; chorismate biosynthesis; chorismate from D-erythrose 4-phosphate and phosphoenolpyruvate: step 7/7. In terms of biological role, catalyzes the anti-1,4-elimination of the C-3 phosphate and the C-6 proR hydrogen from 5-enolpyruvylshikimate-3-phosphate (EPSP) to yield chorismate, which is the branch point compound that serves as the starting substrate for the three terminal pathways of aromatic amino acid biosynthesis. This reaction introduces a second double bond into the aromatic ring system. The polypeptide is Chorismate synthase (Cereibacter sphaeroides (strain ATCC 17023 / DSM 158 / JCM 6121 / CCUG 31486 / LMG 2827 / NBRC 12203 / NCIMB 8253 / ATH 2.4.1.) (Rhodobacter sphaeroides)).